Reading from the N-terminus, the 334-residue chain is Protein-methionine-sulfoxide reductase catalytic subunit MsrP (334 aa).

Residues 1 to 44 constitute a signal peptide (tat-type signal); sequence MKKNQFLKESDVTAESVFFMKRRQVLKALGISAAALSLPHAAHA. Mo-molybdopterin is bound by residues Asn-88, 91–92, Cys-146, Thr-181, Asn-233, Arg-238, and 249–251; these read YE and GIK.

This sequence belongs to the MsrP family. Heterodimer of a catalytic subunit (MsrP) and a heme-binding subunit (MsrQ). Requires Mo-molybdopterin as cofactor. Post-translationally, predicted to be exported by the Tat system. The position of the signal peptide cleavage has not been experimentally proven.

The protein resides in the periplasm. The enzyme catalyses L-methionyl-[protein] + a quinone + H2O = L-methionyl-(S)-S-oxide-[protein] + a quinol. It catalyses the reaction L-methionyl-[protein] + a quinone + H2O = L-methionyl-(R)-S-oxide-[protein] + a quinol. Functionally, part of the MsrPQ system that repairs oxidized periplasmic proteins containing methionine sulfoxide residues (Met-O), using respiratory chain electrons. Thus protects these proteins from oxidative-stress damage caused by reactive species of oxygen and chlorine generated by the host defense mechanisms. MsrPQ is essential for the maintenance of envelope integrity under bleach stress, rescuing a wide series of structurally unrelated periplasmic proteins from methionine oxidation, including the primary periplasmic chaperone SurA and the lipoprotein Pal. The catalytic subunit MsrP is non-stereospecific, being able to reduce both (R-) and (S-) diastereoisomers of methionine sulfoxide. This is Protein-methionine-sulfoxide reductase catalytic subunit MsrP from Escherichia coli O127:H6 (strain E2348/69 / EPEC).